The following is a 320-amino-acid chain: GTPase Era (320 aa).

Residues 25–193 enclose the Era-type G domain; that stretch reads HCGFIAIVGR…RKHVRDHLPK (169 aa). Residues 33–40 are G1; sequence GRPNVGKS. Position 33 to 40 (33 to 40) interacts with GTP; it reads GRPNVGKS. Residues 59–63 are G2; sequence QTTRH. Residues 80-83 are G3; sequence DTPG. Residues 80–84 and 142–145 contribute to the GTP site; these read DTPGL and NKVD. Positions 142–145 are G4; sequence NKVD. The segment at 172–174 is G5; that stretch reads ISA. A KH type-2 domain is found at 216–302; that stretch reads VREKLMRFTG…YLETWVKVKS (87 aa).

Belongs to the TRAFAC class TrmE-Era-EngA-EngB-Septin-like GTPase superfamily. Era GTPase family. Monomer.

The protein localises to the cytoplasm. It localises to the cell inner membrane. In terms of biological role, an essential GTPase that binds both GDP and GTP, with rapid nucleotide exchange. Plays a role in 16S rRNA processing and 30S ribosomal subunit biogenesis and possibly also in cell cycle regulation and energy metabolism. This Vibrio vulnificus (strain CMCP6) protein is GTPase Era.